Reading from the N-terminus, the 100-residue chain is Urease subunit gamma 2 (100 aa).

Belongs to the urease gamma subunit family. As to quaternary structure, heterotrimer of UreA (gamma), UreB (beta) and UreC (alpha) subunits. Three heterotrimers associate to form the active enzyme.

It localises to the cytoplasm. The catalysed reaction is urea + 2 H2O + H(+) = hydrogencarbonate + 2 NH4(+). The protein operates within nitrogen metabolism; urea degradation; CO(2) and NH(3) from urea (urease route): step 1/1. In Psychrobacter cryohalolentis (strain ATCC BAA-1226 / DSM 17306 / VKM B-2378 / K5), this protein is Urease subunit gamma 2.